Reading from the N-terminus, the 616-residue chain is Dihydroxy-acid dehydratase (616 aa).

Asp-81 provides a ligand contact to Mg(2+). Cys-122 is a [2Fe-2S] cluster binding site. Residues Asp-123 and Lys-124 each contribute to the Mg(2+) site. The residue at position 124 (Lys-124) is an N6-carboxylysine. Cys-195 is a [2Fe-2S] cluster binding site. Glu-491 is a binding site for Mg(2+). Ser-517 acts as the Proton acceptor in catalysis.

Belongs to the IlvD/Edd family. Homodimer. Requires [2Fe-2S] cluster as cofactor. The cofactor is Mg(2+).

It catalyses the reaction (2R)-2,3-dihydroxy-3-methylbutanoate = 3-methyl-2-oxobutanoate + H2O. The catalysed reaction is (2R,3R)-2,3-dihydroxy-3-methylpentanoate = (S)-3-methyl-2-oxopentanoate + H2O. Its pathway is amino-acid biosynthesis; L-isoleucine biosynthesis; L-isoleucine from 2-oxobutanoate: step 3/4. It functions in the pathway amino-acid biosynthesis; L-valine biosynthesis; L-valine from pyruvate: step 3/4. In terms of biological role, functions in the biosynthesis of branched-chain amino acids. Catalyzes the dehydration of (2R,3R)-2,3-dihydroxy-3-methylpentanoate (2,3-dihydroxy-3-methylvalerate) into 2-oxo-3-methylpentanoate (2-oxo-3-methylvalerate) and of (2R)-2,3-dihydroxy-3-methylbutanoate (2,3-dihydroxyisovalerate) into 2-oxo-3-methylbutanoate (2-oxoisovalerate), the penultimate precursor to L-isoleucine and L-valine, respectively. In Salmonella newport (strain SL254), this protein is Dihydroxy-acid dehydratase.